The following is a 445-amino-acid chain: Secretin receptor (445 aa).

The N-terminal stretch at 1 to 21 (MCPRPGPPLGLWLLLGFACAA) is a signal peptide. Over 22–137 (HLVGAPPRLC…HERQHAYLLK (116 aa)) the chain is Extracellular. Cystine bridges form between Cys44-Cys71, Cys62-Cys103, and Cys85-Cys119. 4 N-linked (GlcNAc...) asparagine glycosylation sites follow: Asn68, Asn96, Asn102, and Asn124. A helical membrane pass occupies residues 138-163 (LKVMYTVGYSSSLVMLLVALGILCAF). Residues 164–170 (RRLHCTR) are Cytoplasmic-facing. The chain crosses the membrane as a helical span at residues 171-191 (NYIHMHLFLSFILRALSNFIK). The Extracellular segment spans residues 192–212 (DAVLFSSDDAIHCDAHRVGCK). A disulfide bond links Cys211 and Cys281. Residues 213–235 (LVMVFFQYCIMANYAWLLVEGLY) traverse the membrane as a helical segment. At 236 to 250 (LHSLLVVSFFSERKC) the chain is on the cytoplasmic side. Residues 251-272 (LQGFVVLGWGSPAMFVTSWAVT) form a helical membrane-spanning segment. The Extracellular portion of the chain corresponds to 273-287 (RHFLEDSGCWDINAN). The chain crosses the membrane as a helical span at residues 288–311 (AAIWWVIRGPVILSILINFILFIN). Topologically, residues 312–336 (ILRILTRKLRTQETRGQDMNHYKRL) are cytoplasmic. Residues 337–352 (ARSTLLLIPLFGVHYI) traverse the membrane as a helical segment. Over 353–363 (VFVFSPEGAME) the chain is Extracellular. Residues 364 to 387 (IQLFFELALGSFQGLVVAVLYCFL) form a helical membrane-spanning segment. Residues 388-445 (NGEVQLEVQKKWQQWHLWEPPLCPVALSSSFSNGTSSLNSTKACPSGRSRDTCKVSII) lie on the Cytoplasmic side of the membrane.

This sequence belongs to the G-protein coupled receptor 2 family. In terms of processing, phosphorylated on Ser and Thr residues at the cytoplasmic C-terminus by G protein-coupled receptor kinases (GRKs).

The protein localises to the cell membrane. The protein resides in the basolateral cell membrane. Functionally, g protein-coupled receptor activated by secretin (SCT), which is involved in different processes such as regulation of the pH of the duodenal content, food intake and water homeostasis. Ligand binding causes a conformation change that triggers signaling via guanine nucleotide-binding proteins (G proteins) and activates cAMP-dependent pathway. Upon binding to secretin, regulates the pH of the duodenum by (1) inhibiting the secretion of gastric acid from the parietal cells of the stomach and (2) stimulating the production of bicarbonate (NaHCO(3)) from the ductal cells of the pancreas. In addition to regulating the pH of the duodenal content, plays a central role in diet induced thermogenesis: acts as a non-sympathetic brown fat (BAT) activator mediating prandial thermogenesis, which consequentially induces satiation. Mechanistically, secretin released by the gut after a meal binds to secretin receptor (SCTR) in brown adipocytes, activating brown fat thermogenesis by stimulating lipolysis, which is sensed in the brain and promotes satiation. Also able to stimulate lipolysis in white adipocytes. Also plays an important role in cellular osmoregulation by regulating renal water reabsorption. Also plays a role in the central nervous system: required for synaptic plasticity. This is Secretin receptor (SCTR) from Oryctolagus cuniculus (Rabbit).